A 349-amino-acid polypeptide reads, in one-letter code: Fructose-1,6-bisphosphatase class 1 (349 aa).

4 residues coordinate Mg(2+): Glu113, Asp135, Ile137, and Asp138. Substrate-binding positions include 138 to 141, Asn230, Tyr258, and Lys288; that span reads DGSS. Residue Glu294 coordinates Mg(2+).

This sequence belongs to the FBPase class 1 family. Homotetramer. The cofactor is Mg(2+).

The protein resides in the cytoplasm. It catalyses the reaction beta-D-fructose 1,6-bisphosphate + H2O = beta-D-fructose 6-phosphate + phosphate. It functions in the pathway carbohydrate biosynthesis; Calvin cycle. This Trichormus variabilis (strain ATCC 29413 / PCC 7937) (Anabaena variabilis) protein is Fructose-1,6-bisphosphatase class 1.